A 620-amino-acid polypeptide reads, in one-letter code: 1-deoxy-D-xylulose-5-phosphate synthase (620 aa).

Residues H80 and G121–S123 each bind thiamine diphosphate. D152 serves as a coordination point for Mg(2+). Thiamine diphosphate-binding positions include G153 to A154, N181, Y288, and E370. A Mg(2+)-binding site is contributed by N181.

It belongs to the transketolase family. DXPS subfamily. As to quaternary structure, homodimer. Mg(2+) is required as a cofactor. Thiamine diphosphate serves as cofactor.

It carries out the reaction D-glyceraldehyde 3-phosphate + pyruvate + H(+) = 1-deoxy-D-xylulose 5-phosphate + CO2. Its pathway is metabolic intermediate biosynthesis; 1-deoxy-D-xylulose 5-phosphate biosynthesis; 1-deoxy-D-xylulose 5-phosphate from D-glyceraldehyde 3-phosphate and pyruvate: step 1/1. In terms of biological role, catalyzes the acyloin condensation reaction between C atoms 2 and 3 of pyruvate and glyceraldehyde 3-phosphate to yield 1-deoxy-D-xylulose-5-phosphate (DXP). This Citrobacter koseri (strain ATCC BAA-895 / CDC 4225-83 / SGSC4696) protein is 1-deoxy-D-xylulose-5-phosphate synthase.